The sequence spans 225 residues: Riboflavin kinase (225 aa).

A unknown region spans residues 1-89; sequence MPDIEYLKKL…SRIFSSEPDT (89 aa). The riboflavin kinase stretch occupies residues 90 to 225; it reads LELEGNVLKG…LKKQGMEGQK (136 aa). Residue 99 to 104 coordinates CDP; the sequence is GLGEGQ. Residues threonine 128 and asparagine 130 each coordinate Mg(2+). FMN-binding residues include threonine 185 and glutamate 193. 198–201 serves as a coordination point for CDP; it reads VKLR.

It belongs to the archaeal riboflavin kinase family. It depends on Mg(2+) as a cofactor.

It catalyses the reaction riboflavin + CTP = CDP + FMN + H(+). It participates in cofactor biosynthesis; FMN biosynthesis; FMN from riboflavin (CTP route): step 1/1. In terms of biological role, catalyzes the CTP-dependent phosphorylation of riboflavin (vitamin B2) to form flavin mononucleotide (FMN). The protein is Riboflavin kinase (ribK) of Methanosarcina mazei (strain ATCC BAA-159 / DSM 3647 / Goe1 / Go1 / JCM 11833 / OCM 88) (Methanosarcina frisia).